A 512-amino-acid polypeptide reads, in one-letter code: Dihydroniloticin synthase CYP71CD1 (512 aa).

Residues 7–27 (YFTVTSLLVFLTFLLRLVWGW) form a helical membrane-spanning segment. Heme is bound at residue C451.

This sequence belongs to the cytochrome P450 family. Heme is required as a cofactor. Accumulates in mature fruits and in juice vesicles.

The protein localises to the membrane. The catalysed reaction is tirucalla-7,24-dien-3beta-ol + 2 reduced [NADPH--hemoprotein reductase] + 2 O2 = dihydroniloticin + 2 oxidized [NADPH--hemoprotein reductase] + 2 H2O + 2 H(+). The protein operates within secondary metabolite biosynthesis; terpenoid biosynthesis. Its function is as follows. Monooxygenase involved in the biosynthesis of limonoids triterpene natural products such as limonin, a compound with insecticidal activity responsible for the bitter taste in citrus. Catalyzes the conversion of tirucalladienol to dihydroniloticin. In Citrus sinensis (Sweet orange), this protein is Dihydroniloticin synthase CYP71CD1.